The following is a 181-amino-acid chain: Salmonella anti-inflammatory response activator (181 aa).

Residues 4–24 (FVYIYILVIYGSYLWFSLGGN) form a helical membrane-spanning segment.

As to quaternary structure, interacts with host (human) STAT3.

The protein resides in the membrane. It localises to the host cytoplasm. In terms of biological role, a Salmonella strain-specific effector that induces a host STAT3-dependent anti-inflammatory pathway. In bacteria-infected host cells (human) leads to phosphorylation of host STAT3, at least on 'Tyr-705' and interleukin-10 (IL-10, IL10) production; expressing the gene alone in host cells induces STAT3 phosphorylation and IL-10 production. IL-10 production requires STAT3 in infected cells. Contributes to virulence in mouse infection models. Encoded in only a few S.typhimurium serovars, it may be a specific effector for adaptation to bovine hosts. The polypeptide is Salmonella anti-inflammatory response activator (Salmonella typhimurium (strain 14028s / SGSC 2262)).